The following is a 449-amino-acid chain: UDP-N-acetylglucosamine 1-carboxyvinyltransferase (449 aa).

Residue 51–52 (KN) coordinates phosphoenolpyruvate. Arginine 121 is a UDP-N-acetyl-alpha-D-glucosamine binding site. Cysteine 145 (proton donor) is an active-site residue. At cysteine 145 the chain carries 2-(S-cysteinyl)pyruvic acid O-phosphothioketal. UDP-N-acetyl-alpha-D-glucosamine is bound by residues 150–154 (RPVDQ), aspartate 333, and isoleucine 355.

It belongs to the EPSP synthase family. MurA subfamily.

It is found in the cytoplasm. The enzyme catalyses phosphoenolpyruvate + UDP-N-acetyl-alpha-D-glucosamine = UDP-N-acetyl-3-O-(1-carboxyvinyl)-alpha-D-glucosamine + phosphate. Its pathway is cell wall biogenesis; peptidoglycan biosynthesis. Functionally, cell wall formation. Adds enolpyruvyl to UDP-N-acetylglucosamine. The chain is UDP-N-acetylglucosamine 1-carboxyvinyltransferase from Burkholderia mallei (strain ATCC 23344).